A 231-amino-acid polypeptide reads, in one-letter code: MDALTDRQLEVLRFIARQIEDNGYPPTIREIGEALDIRSTNGVNDHLKALERKGFLTRDPVKSRALIPTPQAREVLGGGARASNVVPFTRTPAVGLKPAGRLVEIPILGRVAAGQPILAQERVEDTVQVDSFLLGTNKKVYGLRVQGDSMIGDGILPGDYIFVKKQLHAEDGDIVVAMIDEEATVKRVYFEGDRVRFQPSNPRMAPIYVRGSDFRTTMILGVVVGVYRKLG.

The segment at residues 28–48 (IREIGEALDIRSTNGVNDHLK) is a DNA-binding region (H-T-H motif). Catalysis depends on for autocatalytic cleavage activity residues Ser149 and Lys186.

This sequence belongs to the peptidase S24 family. As to quaternary structure, homodimer.

The enzyme catalyses Hydrolysis of Ala-|-Gly bond in repressor LexA.. Represses a number of genes involved in the response to DNA damage (SOS response), including recA and lexA. In the presence of single-stranded DNA, RecA interacts with LexA causing an autocatalytic cleavage which disrupts the DNA-binding part of LexA, leading to derepression of the SOS regulon and eventually DNA repair. The sequence is that of LexA repressor from Anaeromyxobacter sp. (strain Fw109-5).